A 392-amino-acid polypeptide reads, in one-letter code: NADH dehydrogenase-like protein YjlD (392 aa).

Belongs to the NADH dehydrogenase family. It depends on FAD as a cofactor.

This Bacillus subtilis (strain 168) protein is NADH dehydrogenase-like protein YjlD (yjlD).